Reading from the N-terminus, the 248-residue chain is Glutathione S-transferase omega-2 (248 aa).

One can recognise a GST N-terminal domain in the interval 22-101 (GVIRIYSMRF…YLDDVFPGRK (80 aa)). Cys32 acts as the Nucleophile in catalysis. Glutathione is bound by residues Lys59, Val72, and 85–86 (ES). Residues 106-231 (DPYERARQKM…IFLGFLNLYF (126 aa)) enclose the GST C-terminal domain.

This sequence belongs to the GST superfamily. Omega family.

The enzyme catalyses RX + glutathione = an S-substituted glutathione + a halide anion + H(+). The catalysed reaction is L-dehydroascorbate + 2 glutathione = glutathione disulfide + L-ascorbate. It catalyses the reaction methylarsonate + 2 glutathione + H(+) = methylarsonous acid + glutathione disulfide + H2O. Functionally, exhibits glutathione-dependent thiol transferase activity. Has high dehydroascorbate reductase activity and may contribute to the recycling of ascorbic acid. Participates in the biotransformation of inorganic arsenic and reduces monomethylarsonic acid (MMA). The polypeptide is Glutathione S-transferase omega-2 (Gsto2) (Rattus norvegicus (Rat)).